The following is a 203-amino-acid chain: Small ribosomal subunit protein uS4c (203 aa).

The interval 15-43 (LGSLPGLTSKRPRSGSDLRNQSRSGKRSQ) is disordered. Positions 89–169 (MRLDNILFRL…LPKHLTLHSL (81 aa)) constitute an S4 RNA-binding domain.

The protein belongs to the universal ribosomal protein uS4 family. Part of the 30S ribosomal subunit. Contacts protein S5. The interaction surface between S4 and S5 is involved in control of translational fidelity.

The protein resides in the plastid. Its subcellular location is the chloroplast. In terms of biological role, one of the primary rRNA binding proteins, it binds directly to 16S rRNA where it nucleates assembly of the body of the 30S subunit. Functionally, with S5 and S12 plays an important role in translational accuracy. In Illicium oligandrum (Star anise), this protein is Small ribosomal subunit protein uS4c (rps4).